The following is a 102-amino-acid chain: Small ribosomal subunit protein uS10 (102 aa).

Belongs to the universal ribosomal protein uS10 family. As to quaternary structure, part of the 30S ribosomal subunit.

In terms of biological role, involved in the binding of tRNA to the ribosomes. This chain is Small ribosomal subunit protein uS10, found in Pseudothermotoga lettingae (strain ATCC BAA-301 / DSM 14385 / NBRC 107922 / TMO) (Thermotoga lettingae).